Reading from the N-terminus, the 136-residue chain is NADPH-dependent 7-cyano-7-deazaguanine reductase (136 aa).

The Thioimide intermediate role is filled by Cys53. The Proton donor role is filled by Asp60. Substrate-binding positions include 75-77 and 94-95; these read VEL and HE.

The protein belongs to the GTP cyclohydrolase I family. QueF type 1 subfamily.

It is found in the cytoplasm. It catalyses the reaction 7-aminomethyl-7-carbaguanine + 2 NADP(+) = 7-cyano-7-deazaguanine + 2 NADPH + 3 H(+). Its pathway is tRNA modification; tRNA-queuosine biosynthesis. In terms of biological role, catalyzes the NADPH-dependent reduction of 7-cyano-7-deazaguanine (preQ0) to 7-aminomethyl-7-deazaguanine (preQ1). This chain is NADPH-dependent 7-cyano-7-deazaguanine reductase, found in Nostoc sp. (strain PCC 7120 / SAG 25.82 / UTEX 2576).